The following is a 304-amino-acid chain: Probable 5-dehydro-4-deoxyglucarate dehydratase (304 aa).

The protein belongs to the DapA family.

The catalysed reaction is 5-dehydro-4-deoxy-D-glucarate + H(+) = 2,5-dioxopentanoate + CO2 + H2O. The protein operates within carbohydrate acid metabolism; D-glucarate degradation; 2,5-dioxopentanoate from D-glucarate: step 2/2. The chain is Probable 5-dehydro-4-deoxyglucarate dehydratase from Pseudarthrobacter chlorophenolicus (strain ATCC 700700 / DSM 12829 / CIP 107037 / JCM 12360 / KCTC 9906 / NCIMB 13794 / A6) (Arthrobacter chlorophenolicus).